The primary structure comprises 76 residues: Alpha-amylase inhibitor Z-2685 (76 aa).

2 disulfide bridges follow: Cys9-Cys25 and Cys43-Cys70.

In terms of biological role, inhibits mammalian alpha-amylases specifically but has no action on plant and microbial alpha-amylases. In Streptomyces rochei (Streptomyces parvullus), this protein is Alpha-amylase inhibitor Z-2685.